Reading from the N-terminus, the 148-residue chain is Deoxyuridine 5'-triphosphate nucleotidohydrolase (148 aa).

Substrate contacts are provided by residues 67–69, N80, 84–86, and M94; these read RSG and LID.

It belongs to the dUTPase family. Mg(2+) serves as cofactor.

It carries out the reaction dUTP + H2O = dUMP + diphosphate + H(+). It functions in the pathway pyrimidine metabolism; dUMP biosynthesis; dUMP from dCTP (dUTP route): step 2/2. Its function is as follows. This enzyme is involved in nucleotide metabolism: it produces dUMP, the immediate precursor of thymidine nucleotides and it decreases the intracellular concentration of dUTP so that uracil cannot be incorporated into DNA. The polypeptide is Deoxyuridine 5'-triphosphate nucleotidohydrolase (Paraburkholderia xenovorans (strain LB400)).